The primary structure comprises 185 residues: Large ribosomal subunit protein uL5 (185 aa).

Belongs to the universal ribosomal protein uL5 family. In terms of assembly, part of the 50S ribosomal subunit; part of the 5S rRNA/L5/L18/L25 subcomplex. Contacts the 5S rRNA and the P site tRNA. Forms a bridge to the 30S subunit in the 70S ribosome.

In terms of biological role, this is one of the proteins that bind and probably mediate the attachment of the 5S RNA into the large ribosomal subunit, where it forms part of the central protuberance. In the 70S ribosome it contacts protein S13 of the 30S subunit (bridge B1b), connecting the 2 subunits; this bridge is implicated in subunit movement. Contacts the P site tRNA; the 5S rRNA and some of its associated proteins might help stabilize positioning of ribosome-bound tRNAs. In Azorhizobium caulinodans (strain ATCC 43989 / DSM 5975 / JCM 20966 / LMG 6465 / NBRC 14845 / NCIMB 13405 / ORS 571), this protein is Large ribosomal subunit protein uL5.